A 507-amino-acid chain; its full sequence is MNIFISLAILIATTHCLTLLRDPVTQNGASKFEKSIGKYKYEEGYLKAPIDPFAFTNDLEFDLRYFLNIDHYETGGPILFYTGNEGSLEAFAENTGFMWDLAPELKAAVVFVEHRFYGKSQPFKNESYTDIRHLGYLSSQQALADFALSVQFFKNEKIKGAQKSAVIAFGGSYGGMLSAWFRIKYPHIVDGAIAASAPVFWFTDSNIPEDVYDFIVTRAFLDAGCNRKAIEKGWIALDELAKSDSGRQYLNVLYKLDPKSKLENKDDIGFLKQYIRESMEAMAMVNYPYPTSFLSSLPAWPVKEACKSASQPGKTQEESAEQLYKIVNLYYNYTGDKSTHCANAAKCDSAYGSLGDPLGWPFQTCTEMVMPLCGSGYPNDFFWKDCPFTSEKYAEFCMQTFSSIHYNKTLLRPLAGGLAFGATSLPSASNIVFSNGYLDPWSGGGYDHSDKVQGSVISVILKQGAHHYDLRGAHPQDTEEVKKVRAMETQAIKKWIKEKARNSWRYD.

The signal sequence occupies residues 1–16 (MNIFISLAILIATTHC). N-linked (GlcNAc...) asparagine glycosylation occurs at asparagine 125. Serine 172 acts as the Charge relay system in catalysis. Asparagine 332 and asparagine 407 each carry an N-linked (GlcNAc...) asparagine glycan. Active-site charge relay system residues include aspartate 439 and histidine 466.

The protein belongs to the peptidase S28 family.

The chain is Prolyl carboxy peptidase like protein 5 from Caenorhabditis elegans.